Reading from the N-terminus, the 434-residue chain is Nicotinate phosphoribosyltransferase (434 aa).

His242 is modified (phosphohistidine; by autocatalysis).

This sequence belongs to the NAPRTase family. Transiently phosphorylated on a His residue during the reaction cycle. Phosphorylation strongly increases the affinity for substrates and increases the rate of nicotinate D-ribonucleotide production. Dephosphorylation regenerates the low-affinity form of the enzyme, leading to product release.

The catalysed reaction is nicotinate + 5-phospho-alpha-D-ribose 1-diphosphate + ATP + H2O = nicotinate beta-D-ribonucleotide + ADP + phosphate + diphosphate. The protein operates within cofactor biosynthesis; NAD(+) biosynthesis; nicotinate D-ribonucleotide from nicotinate: step 1/1. Catalyzes the synthesis of beta-nicotinate D-ribonucleotide from nicotinate and 5-phospho-D-ribose 1-phosphate at the expense of ATP. This Rhizobium leguminosarum bv. trifolii (strain WSM2304) protein is Nicotinate phosphoribosyltransferase.